A 428-amino-acid polypeptide reads, in one-letter code: Immunoglobulin superfamily containing leucine-rich repeat protein (428 aa).

The first 18 residues, 1–18, serve as a signal peptide directing secretion; that stretch reads MQELRLLCLVVLVGLAQA. Positions 19–50 constitute an LRRNT domain; sequence CPEPCECGEKYGFHIADCAYRDLQAVPSGFPA. N51 carries N-linked (GlcNAc...) asparagine glycosylation. LRR repeat units follow at residues 51-72, 75-96, 99-122, 123-144, and 147-168; these read NVTTLSLSANQLPSLPGGAFRE, RLQSLWLAHNEIRSVAAGALAS, QLKSLDLSHNLISDFAWSDLHSLS, ALQLLKMDSNELTFIPRDAFRS, and ALRSLQLNHNRLHTLAEGTFAP. An LRRCT domain is found at 180–231; the sequence is NPFDCTCGIVWFKTWALTTAVSIPEQDNITCTSPHVLKGTRLNRLLPLPCSA. Residues 232–343 enclose the Ig-like domain; that stretch reads PSVQLTYQPS…GSAESSVNVA (112 aa). An intrachain disulfide couples C257 to C327. N309 carries an N-linked (GlcNAc...) asparagine glycan.

The protein localises to the secreted. This Bos taurus (Bovine) protein is Immunoglobulin superfamily containing leucine-rich repeat protein (ISLR).